A 206-amino-acid polypeptide reads, in one-letter code: Putative type I restriction enzyme MpnIIP endonuclease subunit C-terminal part (206 aa).

In terms of biological role, the C-terminal section of a putative type I restriction enzyme that if reconstituted might recognize 5'-GAN(7)TAY-3' and cleave a random distance away. Subunit R is required for both nuclease and ATPase activities, but not for modification. The protein is Putative type I restriction enzyme MpnIIP endonuclease subunit C-terminal part of Mycoplasma pneumoniae (strain ATCC 29342 / M129 / Subtype 1) (Mycoplasmoides pneumoniae).